A 94-amino-acid chain; its full sequence is Acylphosphatase (94 aa).

An Acylphosphatase-like domain is found at 8–94 (HIRAWVSGKV…ETPPLGFEVC (87 aa)). Active-site residues include Arg-23 and Asn-41.

This sequence belongs to the acylphosphatase family.

It carries out the reaction an acyl phosphate + H2O = a carboxylate + phosphate + H(+). This is Acylphosphatase (acyP) from Hahella chejuensis (strain KCTC 2396).